The primary structure comprises 53 residues: UPF0391 membrane protein BPSS2216 (53 aa).

2 consecutive transmembrane segments (helical) span residues 5 to 25 (ALVF…GIAA) and 30 to 50 (IAKI…VLGV).

This sequence belongs to the UPF0391 family.

It is found in the cell membrane. The polypeptide is UPF0391 membrane protein BPSS2216 (Burkholderia pseudomallei (strain K96243)).